The sequence spans 486 residues: 3-sulfolactaldehyde dehydrogenase (486 aa).

NADP(+)-binding positions include 157 to 158 (WN), 181 to 184 (RPAS), and 234 to 235 (GS). E256 functions as the Proton acceptor in the catalytic mechanism. L257 is an NADP(+) binding site. Residue C290 is the Nucleophile of the active site. Position 387 (E387) interacts with NADP(+).

The protein belongs to the aldehyde dehydrogenase family.

It catalyses the reaction (2S)-3-sulfolactaldehyde + NADP(+) + H2O = (2S)-3-sulfolactate + NADPH + 2 H(+). The catalysed reaction is (2S)-3-sulfolactaldehyde + NAD(+) + H2O = (2S)-3-sulfolactate + NADH + 2 H(+). Functionally, catalyzes the oxidation of (2S)-3-sulfolactaldehyde to (2S)-3-sulfolactate, using both NAD(+) and NADP(+) as electron acceptors. Is involved in a degradation pathway of sulfoquinovose (SQ) that allows P.putida SQ1 to use SQ as the sole carbon and energy source for growth. The protein is 3-sulfolactaldehyde dehydrogenase of Pseudomonas putida (Arthrobacter siderocapsulatus).